An 83-amino-acid polypeptide reads, in one-letter code: MASDVRGRRKTKIGVVVSSKMEKTVVVRVERVYSHPQYAKVVRDSSKYYAHNELDVKEGDTVRIQETRPLSKTKRWRVVDRVN.

This sequence belongs to the universal ribosomal protein uS17 family. As to quaternary structure, part of the 30S ribosomal subunit.

In terms of biological role, one of the primary rRNA binding proteins, it binds specifically to the 5'-end of 16S ribosomal RNA. In Chlamydia muridarum (strain MoPn / Nigg), this protein is Small ribosomal subunit protein uS17.